The following is a 225-amino-acid chain: Protein-L-isoaspartate O-methyltransferase (225 aa).

Serine 75 is a catalytic residue.

Belongs to the methyltransferase superfamily. L-isoaspartyl/D-aspartyl protein methyltransferase family.

The protein localises to the cytoplasm. The catalysed reaction is [protein]-L-isoaspartate + S-adenosyl-L-methionine = [protein]-L-isoaspartate alpha-methyl ester + S-adenosyl-L-homocysteine. Catalyzes the methyl esterification of L-isoaspartyl residues in peptides and proteins that result from spontaneous decomposition of normal L-aspartyl and L-asparaginyl residues. It plays a role in the repair and/or degradation of damaged proteins. This is Protein-L-isoaspartate O-methyltransferase from Xanthomonas oryzae pv. oryzae (strain PXO99A).